Here is a 468-residue protein sequence, read N- to C-terminus: Procollagen C-endopeptidase enhancer 1 (468 aa).

The N-terminal stretch at 1–24 (MLPAALTSLLGPFLLAWVLPLARG) is a signal peptide. Asn-28 is a glycosylation site (N-linked (GlcNAc...) asparagine). 4 cysteine pairs are disulfide-bonded: Cys-36-Cys-62, Cys-89-Cys-111, Cys-158-Cys-185, and Cys-212-Cys-235. CUB domains are found at residues 36-148 (CGGD…YSGR) and 158-272 (CGGR…YRTL). Thr-41 carries the phosphothreonine modification. Phosphoserine is present on Ser-49. The disordered stretch occupies residues 271 to 341 (TLPRDAVEKE…VAPDAPSITC (71 aa)). Residues 272–281 (LPRDAVEKES) show a composition bias toward basic and acidic residues. 2 disulfide bridges follow: Cys-341/Cys-409 and Cys-356/Cys-460. The 120-residue stretch at 341-460 (CPKQYKRSGT…ILSNLSKRKC (120 aa)) folds into the NTR domain. Asn-454 is a glycosylation site (N-linked (GlcNAc...) asparagine).

As to quaternary structure, interacts with EFEMP2. As to expression, expressed at highest levels in collagen-rich tissues, especially tendon. Also expressed in cornea and sterna.

It localises to the secreted. Binds to the C-terminal propeptide of type I procollagen and enhances procollagen C-proteinase activity. This Rattus norvegicus (Rat) protein is Procollagen C-endopeptidase enhancer 1 (Pcolce).